A 485-amino-acid polypeptide reads, in one-letter code: Forkhead box protein N3 (485 aa).

The segment at 1–21 (MGPVMPPSKKPESPGISVSSG) is disordered. Residues S83, S85, and S97 each carry the phosphoserine modification. The disordered stretch occupies residues 86–108 (PVQDLDDDTPPSPAHSDMPYDAR). A DNA-binding region (fork-head) is located at residues 114–210 (KPPYSFSCLI…QALKKTPYHS (97 aa)). A disordered region spans residues 315 to 454 (RTESEPSCGS…DEEMKEAAGS (140 aa)). Over residues 338-359 (SSAKSSHARSTSPASDCVSSSS) the composition is skewed to low complexity. The span at 382–404 (HESHSETEEDDRKCSPKEAKDAL) shows a compositional bias: basic and acidic residues. Basic residues predominate over residues 412-424 (QHKKRQHFAKARK). S443 is modified (phosphoserine).

Interacts through its C-terminus with the C-terminus of SNW1/SKIP.

It is found in the nucleus. Acts as a transcriptional repressor. May be involved in DNA damage-inducible cell cycle arrests (checkpoints). In Sus scrofa (Pig), this protein is Forkhead box protein N3 (FOXN3).